Reading from the N-terminus, the 194-residue chain is Peptidyl-tRNA hydrolase (194 aa).

A tRNA-binding site is contributed by tyrosine 17. Histidine 22 serves as the catalytic Proton acceptor. TRNA-binding residues include phenylalanine 68, asparagine 70, and asparagine 116.

Belongs to the PTH family. In terms of assembly, monomer.

The protein localises to the cytoplasm. It catalyses the reaction an N-acyl-L-alpha-aminoacyl-tRNA + H2O = an N-acyl-L-amino acid + a tRNA + H(+). Its function is as follows. Hydrolyzes ribosome-free peptidyl-tRNAs (with 1 or more amino acids incorporated), which drop off the ribosome during protein synthesis, or as a result of ribosome stalling. Catalyzes the release of premature peptidyl moieties from peptidyl-tRNA molecules trapped in stalled 50S ribosomal subunits, and thus maintains levels of free tRNAs and 50S ribosomes. This chain is Peptidyl-tRNA hydrolase, found in Actinobacillus pleuropneumoniae serotype 7 (strain AP76).